The primary structure comprises 231 residues: Class A basic helix-loop-helix protein 9 (231 aa).

In terms of domain architecture, bHLH spans 61 to 113 (ARRMAANVRERKRILDYNEAFNALRRALQHDLGGKRLSKIATLRRAIHRITAL). The interval 135–168 (QAAQGSSTGNSSFSVPRSAPSPIAPSLTRRDIAS) is disordered. Residues 137-149 (AQGSSTGNSSFSV) show a composition bias toward polar residues.

In terms of assembly, heterodimer. Efficient DNA binding requires dimerization with another bHLH protein. Interacts with TCF3, TCF4, and TCF12.

The protein localises to the nucleus. In terms of biological role, transcription factor, which play a role in limb development. Is an essential player in the regulatory network governing transcription of genes implicated in limb morphogenesis. This is Class A basic helix-loop-helix protein 9 (Bhlha9) from Mus musculus (Mouse).